A 206-amino-acid chain; its full sequence is Synaptosomal-associated protein 25 (206 aa).

The span at 1 to 20 (MAEDADMRNELEEMQRRADQ) shows a compositional bias: basic and acidic residues. The segment at 1 to 25 (MAEDADMRNELEEMQRRADQLADES) is disordered. The tract at residues 1 to 75 (MAEDADMRNE…QINKDMKEAE (75 aa)) is interaction with CENPF. In terms of domain architecture, t-SNARE coiled-coil homology 1 spans 19 to 81 (DQLADESLES…KEAEKNSTDL (63 aa)). Residues Cys-85, Cys-88, Cys-90, and Cys-92 are each lipidated (S-palmitoyl cysteine). An interaction with ZDHHC17 region spans residues 111 to 120 (GVVASQPARV). Thr-138 bears the Phosphothreonine mark. Residues 140–202 (DARENEMDEN…DEANQRATKM (63 aa)) enclose the t-SNARE coiled-coil homology 2 domain. Ser-154 and Ser-187 each carry phosphoserine.

Belongs to the SNAP-25 family. Part of the SNARE core complex containing SNAP25, VAMP2 and STX1A; this complex binds CPLX1. Found in a complex containing SYT1, SV2B and syntaxin-1. Found in a ternary complex with STX1A and VAMP8. Interacts with HSC70 and with SYT9, forming a complex with DNAJC5. The interaction with SYT9 is inhibited in presence of calcium. Isoform 1 and isoform 2 interact with BLOC1S6. Interacts with CENPF. Interacts with EQTN. Interacts with HGS. Interacts with KCNB1 (via N-terminus); reduces the voltage-dependent potassium channel KCNB1 activity in pancreatic beta cells. Interacts with OTOF. Interacts with RIMS1. Interacts with SNAPIN. Interacts with STXBP6. Interacts with TRIM9. Interacts with ZDHHC13 (via ANK repeats). Interacts with ZDHHC17 (via ANK repeats). Associates with the BLOC-1 complex. Interacts with PLCL1 (via C2 domain). Interacts with PRRT2; this interaction may impair the formation of the SNARE complex. Interacts with alpha-synuclein/SNCA. Interacts with PRPH2. Interacts with ROM1. Interacts with STX3. Post-translationally, palmitoylated. Cys-85 appears to be the main site, and palmitoylation is required for membrane association.

Its subcellular location is the cytoplasm. It is found in the perinuclear region. The protein resides in the cell membrane. It localises to the synapse. The protein localises to the synaptosome. Its subcellular location is the photoreceptor inner segment. Its function is as follows. t-SNARE involved in the molecular regulation of neurotransmitter release. May play an important role in the synaptic function of specific neuronal systems. Associates with proteins involved in vesicle docking and membrane fusion. Regulates plasma membrane recycling through its interaction with CENPF. Modulates the gating characteristics of the delayed rectifier voltage-dependent potassium channel KCNB1 in pancreatic beta cells. This is Synaptosomal-associated protein 25 (SNAP25) from Pongo abelii (Sumatran orangutan).